Consider the following 403-residue polypeptide: Phosphopentomutase (403 aa).

Aspartate 13, aspartate 298, histidine 303, aspartate 339, histidine 340, and histidine 351 together coordinate Mn(2+).

This sequence belongs to the phosphopentomutase family. Requires Mn(2+) as cofactor.

It is found in the cytoplasm. The enzyme catalyses 2-deoxy-alpha-D-ribose 1-phosphate = 2-deoxy-D-ribose 5-phosphate. The catalysed reaction is alpha-D-ribose 1-phosphate = D-ribose 5-phosphate. The protein operates within carbohydrate degradation; 2-deoxy-D-ribose 1-phosphate degradation; D-glyceraldehyde 3-phosphate and acetaldehyde from 2-deoxy-alpha-D-ribose 1-phosphate: step 1/2. Isomerase that catalyzes the conversion of deoxy-ribose 1-phosphate (dRib-1-P) and ribose 1-phosphate (Rib-1-P) to deoxy-ribose 5-phosphate (dRib-5-P) and ribose 5-phosphate (Rib-5-P), respectively. The chain is Phosphopentomutase from Streptococcus thermophilus.